Consider the following 411-residue polypeptide: Acetate kinase (411 aa).

Position 7 (Asn-7) interacts with Mg(2+). Lys-14 is a binding site for ATP. Arg-94 is a substrate binding site. The active-site Proton donor/acceptor is Asp-151. ATP-binding positions include 211–215 (HLGNG), 285–287 (DMR), and 333–337 (GIGEN). Glu-387 contributes to the Mg(2+) binding site.

Belongs to the acetokinase family. Homodimer. Mg(2+) serves as cofactor. Requires Mn(2+) as cofactor.

The protein localises to the cytoplasm. The catalysed reaction is acetate + ATP = acetyl phosphate + ADP. The protein operates within metabolic intermediate biosynthesis; acetyl-CoA biosynthesis; acetyl-CoA from acetate: step 1/2. Catalyzes the formation of acetyl phosphate from acetate and ATP. Can also catalyze the reverse reaction. The polypeptide is Acetate kinase (Syntrophobacter fumaroxidans (strain DSM 10017 / MPOB)).